Here is a 380-residue protein sequence, read N- to C-terminus: 3-isopropylmalate dehydrogenase (380 aa).

Position 79 to 90 (79 to 90) interacts with NAD(+); it reads GPEWAGVHPTPE. Positions 97, 107, 136, and 229 each coordinate substrate. 3 residues coordinate Mg(2+): Asp229, Asp254, and Asp258. Position 294–306 (294–306) interacts with NAD(+); sequence GSAPDISGKGLAN.

The protein belongs to the isocitrate and isopropylmalate dehydrogenases family. Homodimer. Mg(2+) is required as a cofactor. Mn(2+) serves as cofactor.

The protein localises to the cytoplasm. It carries out the reaction (2R,3S)-3-isopropylmalate + NAD(+) = 4-methyl-2-oxopentanoate + CO2 + NADH. It functions in the pathway amino-acid biosynthesis; L-leucine biosynthesis; L-leucine from 3-methyl-2-oxobutanoate: step 3/4. Functionally, catalyzes the oxidation of 3-carboxy-2-hydroxy-4-methylpentanoate (3-isopropylmalate) to 3-carboxy-4-methyl-2-oxopentanoate. The product decarboxylates to 4-methyl-2 oxopentanoate. This is 3-isopropylmalate dehydrogenase (LEU2) from Hapsidospora chrysogena (Acremonium chrysogenum).